The following is a 1361-amino-acid chain: Rho guanine nucleotide exchange factor 18 (1361 aa).

3 disordered regions span residues 33 to 88 (LQDL…SCSE), 131 to 156 (SGGGTPAESPGKECDSPKKRGRSRSV), and 244 to 292 (DGAG…ARER). Basic and acidic residues predominate over residues 50 to 61 (PDSRPTGEEPGR). The span at 64 to 73 (LFSSLAGSQD) shows a compositional bias: polar residues. Positions 74–88 (LSRRRSWERSRSCSE) are enriched in basic and acidic residues. Composition is skewed to basic and acidic residues over residues 245–256 (GAGKNEKSDKST) and 271–292 (RQKEKGKSPAHLKDKGQDARER). Residues 310 to 334 (SSCPLCGKPFLSSASLKEHPRGTLL) form a C2H2-type; degenerate zinc finger. Residues 348 to 368 (TVSQKGGPQPTPSPAGPGTQL) are disordered. A DH domain is found at 447–644 (KRQDVLYELM…KDIISQVDAK (198 aa)). In terms of domain architecture, PH spans 684–786 (QLHLEGMLCW…WMAHIQRAVE (103 aa)). Disordered regions lie at residues 893–980 (ANGQ…DPRL), 1143–1211 (LKKQ…RLAK), 1229–1264 (AAVQQQIPTKLAASTKGGKDKGGKSRGSQRWESSAS), and 1277–1361 (MGKD…VIFF). Residue Thr-912 is modified to Phosphothreonine. A Phosphoserine modification is found at Ser-921. The stretch at 1038–1148 (LEQERQRNFE…LLRRLKKQNT (111 aa)) forms a coiled coil. Residues 1191-1211 (YAERPEVARRDSAPTENRLAK) are compositionally biased toward basic and acidic residues. Residues 1254–1264 (RGSQRWESSAS) show a composition bias toward polar residues. Residues Ser-1289 and Ser-1291 each carry the phosphoserine modification. 2 stretches are compositionally biased toward pro residues: residues 1300–1317 (PAPPPDPGFPAPSPPPAD) and 1334–1344 (PGPPAPSPLPA). A compositionally biased stretch (basic and acidic residues) spans 1349 to 1361 (AKEDASKEDVIFF).

As to quaternary structure, interacts with SEPT9; the interaction may inhibit GEF activity. Interacts with Gbetagamma subunits GNB1 and GNG2. Interacts with EPB41L4B. Interacts with PATJ (via C-terminus). In terms of tissue distribution, expressed in all tissues tested with highest expression in kidney and pancreas. Weakly or not expressed in liver, skeletal muscle and testis. Isoform 1: Expressed in eosinophils. Isoform 2: Expressed in eosinophils. Isoform 3: Expressed in eosinophils. Isoform 4: Not detected in eosinophils.

Its subcellular location is the cytoplasm. The protein resides in the cytoskeleton. It is found in the cell membrane. The protein localises to the apical cell membrane. Functionally, acts as a guanine nucleotide exchange factor (GEF) for RhoA GTPases. Its activation induces formation of actin stress fibers. Also acts as a GEF for RAC1, inducing production of reactive oxygen species (ROS). Does not act as a GEF for CDC42. The G protein beta-gamma (Gbetagamma) subunits of heterotrimeric G proteins act as activators, explaining the integrated effects of LPA and other G-protein coupled receptor agonists on actin stress fiber formation, cell shape change and ROS production. Required for EPB41L4B-mediated regulation of the circumferential actomyosin belt in epithelial cells. This chain is Rho guanine nucleotide exchange factor 18 (ARHGEF18), found in Homo sapiens (Human).